The sequence spans 147 residues: Endoribonuclease YbeY (147 aa).

Residues His107, His111, and His117 each coordinate Zn(2+).

It belongs to the endoribonuclease YbeY family. Zn(2+) is required as a cofactor.

The protein resides in the cytoplasm. Functionally, single strand-specific metallo-endoribonuclease involved in late-stage 70S ribosome quality control and in maturation of the 3' terminus of the 16S rRNA. The protein is Endoribonuclease YbeY of Solibacter usitatus (strain Ellin6076).